Reading from the N-terminus, the 173-residue chain is Photosystem I assembly protein Ycf3 (173 aa).

TPR repeat units lie at residues 36-69 (AFAY…EQGE), 73-106 (SYIL…NPRL), and 121-154 (GELS…APNN).

The protein belongs to the Ycf3 family.

The protein localises to the cellular thylakoid membrane. Its function is as follows. Essential for the assembly of the photosystem I (PSI) complex. May act as a chaperone-like factor to guide the assembly of the PSI subunits. In Synechococcus sp. (strain JA-2-3B'a(2-13)) (Cyanobacteria bacterium Yellowstone B-Prime), this protein is Photosystem I assembly protein Ycf3.